The chain runs to 364 residues: MTIYNFSAGPATLPKPVLEKAQAELLNYQDSGMSVLEMSHRSPEFDKIIKDAEATLRELMAIPDNYKVIFLQGGASTQFTMVPLNLAQGKKAYYLVGGSWGKKAYTEAVKLSKTIPFEPILLASSEDTVYDHIPSFDPSTIDPEAAYVHLTTNNTIEGTSIYDLPDTNGVPIVAHMSSNILAARYNVEDFALIYAGAQKNIGPAGVTVVIVREDFLNDQPQLSAMLDYRIQAEAGSLYNTPPCFNIYISKLVFDWVKNEIGGVDKMAEIQREKSGLLYDYIESSDFYTNPVKDAKDRSVCNIPFVTPSKDLDAKFVAEADALGFKNIKGHRSVGGMRASVYNAFPRQGVLDLIDFMKKFEDENK.

R41 provides a ligand contact to L-glutamate. Pyridoxal 5'-phosphate contacts are provided by residues A75–S76, W100, T155, and Q198. Position 199 is an N6-(pyridoxal phosphate)lysine (K199). Residue N239 to T240 coordinates pyridoxal 5'-phosphate.

It belongs to the class-V pyridoxal-phosphate-dependent aminotransferase family. SerC subfamily. In terms of assembly, homodimer. Pyridoxal 5'-phosphate serves as cofactor.

The protein resides in the cytoplasm. It catalyses the reaction O-phospho-L-serine + 2-oxoglutarate = 3-phosphooxypyruvate + L-glutamate. It carries out the reaction 4-(phosphooxy)-L-threonine + 2-oxoglutarate = (R)-3-hydroxy-2-oxo-4-phosphooxybutanoate + L-glutamate. It functions in the pathway amino-acid biosynthesis; L-serine biosynthesis; L-serine from 3-phospho-D-glycerate: step 2/3. Catalyzes the reversible conversion of 3-phosphohydroxypyruvate to phosphoserine and of 3-hydroxy-2-oxo-4-phosphonooxybutanoate to phosphohydroxythreonine. This Streptococcus thermophilus (strain ATCC BAA-250 / LMG 18311) protein is Phosphoserine aminotransferase.